The following is a 274-amino-acid chain: Large ribosomal subunit protein uL2 (274 aa).

Disordered stretches follow at residues 28–54 (KPYA…TRHI) and 221–274 (RGTA…RTKK). Polar residues predominate over residues 39–49 (KTGGRNNNGRI).

It belongs to the universal ribosomal protein uL2 family. Part of the 50S ribosomal subunit. Forms a bridge to the 30S subunit in the 70S ribosome.

Its function is as follows. One of the primary rRNA binding proteins. Required for association of the 30S and 50S subunits to form the 70S ribosome, for tRNA binding and peptide bond formation. It has been suggested to have peptidyltransferase activity; this is somewhat controversial. Makes several contacts with the 16S rRNA in the 70S ribosome. This Photorhabdus laumondii subsp. laumondii (strain DSM 15139 / CIP 105565 / TT01) (Photorhabdus luminescens subsp. laumondii) protein is Large ribosomal subunit protein uL2.